The sequence spans 452 residues: UPF0210 protein Ccel_1722 (452 aa).

It belongs to the UPF0210 family. Homodimer.

The polypeptide is UPF0210 protein Ccel_1722 (Ruminiclostridium cellulolyticum (strain ATCC 35319 / DSM 5812 / JCM 6584 / H10) (Clostridium cellulolyticum)).